Consider the following 402-residue polypeptide: Sorting nexin 1 (402 aa).

A compositionally biased stretch (polar residues) spans 1–10 (MESTEQPRNI). Residues 1–25 (MESTEQPRNISGSMQSPRSPSSHPY) are disordered. The segment covering 11–24 (SGSMQSPRSPSSHP) has biased composition (low complexity). A Phosphoserine modification is found at S16. One can recognise a PX domain in the interval 24-143 (PYLSVSVTDP…TFLQADEETM (120 aa)). Residues R67, K93, and R109 each contribute to the a 1,2-diacyl-sn-glycero-3-phospho-(1D-myo-inositol-3-phosphate) site. In terms of domain architecture, BAR spans 160–402 (LMQMFRDVQS…LPKLEASYSV (243 aa)).

Belongs to the sorting nexin family. As to quaternary structure, homodimer. Heterodimer with SNX2A or SNX2B. Component of the retromer complex which consists of VPS29 (MAG1), VPS26 (VPS26A or VPS26B), VPS35 (VPS35A or VPS35B or VPS35C), VPS5/17 (SNX1 or SNX2A or SNX2B). Interacts with BLOS1 and BLOS2. In terms of tissue distribution, ubiquitously expressed.

It localises to the cytoplasm. Its subcellular location is the endosome membrane. The protein resides in the prevacuolar compartment membrane. The protein localises to the golgi apparatus. It is found in the trans-Golgi network membrane. Its function is as follows. Plays a role in vesicular protein sorting. Acts at the crossroads between the secretory and endocytic pathways. Is involved in the endosome to vacuole protein transport via its interaction with the BLOS1/2 proteins and, as component of the membrane-associated retromer complex, is also involved in endosome-to-Golgi retrograde transport. Required for the auxin-carrier protein PIN2 sorting to the lytic vacuolar pathway and the trafficking of several plasma membrane proteins. Also involved in the efficient sorting of seed storage protein globulin 12S. The protein is Sorting nexin 1 (SNX1) of Arabidopsis thaliana (Mouse-ear cress).